The following is a 323-amino-acid chain: Prenyl transferase (323 aa).

Residues K46, R49, and H81 each contribute to the isopentenyl diphosphate site. 2 residues coordinate Mg(2+): D88 and D92. R97 is a binding site for an all-trans-polyprenyl diphosphate. Isopentenyl diphosphate is bound at residue R98. An all-trans-polyprenyl diphosphate contacts are provided by K174, T175, and Q212.

Belongs to the FPP/GGPP synthase family. The cofactor is Mg(2+).

The protein localises to the plastid. It is found in the chloroplast. In terms of biological role, possible role in synthesis of the nonaprenyl side chain of plastoquinone or in synthesis of other prenyl chains such as undekaprenyl pyrophosphate. The chain is Prenyl transferase (preA) from Cyanidium caldarium (Red alga).